Consider the following 175-residue polypeptide: Shikimate kinase (175 aa).

Residue 11-16 participates in ATP binding; the sequence is GAGKTT. T15 is a binding site for Mg(2+). Residues D33, R57, and G79 each coordinate substrate. Position 118 (R118) interacts with ATP. R140 contacts substrate.

This sequence belongs to the shikimate kinase family. Monomer. Mg(2+) is required as a cofactor.

Its subcellular location is the cytoplasm. The enzyme catalyses shikimate + ATP = 3-phosphoshikimate + ADP + H(+). Its pathway is metabolic intermediate biosynthesis; chorismate biosynthesis; chorismate from D-erythrose 4-phosphate and phosphoenolpyruvate: step 5/7. In terms of biological role, catalyzes the specific phosphorylation of the 3-hydroxyl group of shikimic acid using ATP as a cosubstrate. This is Shikimate kinase from Bacteroides thetaiotaomicron (strain ATCC 29148 / DSM 2079 / JCM 5827 / CCUG 10774 / NCTC 10582 / VPI-5482 / E50).